Consider the following 476-residue polypeptide: Protein transport protein Sec61 subunit alpha-like 2 (476 aa).

The Cytoplasmic segment spans residues 2–33; that stretch reads AIKFLEVIKPFCAVLPEIQKPERRIQFKEKVL. A helical membrane pass occupies residues 34-53; that stretch reads WTAITLFIFLVCCQIPLFGI. Topologically, residues 54-76 are lumenal; the sequence is MSSDSADPFYWMRVIMASNRGTL. The chain crosses the membrane as a helical span at residues 77-96; that stretch reads MELGISPIVTSGLIMQLLAG. Residues 97–117 are Cytoplasmic-facing; the sequence is AKIIEVGDTPKDRALFNGAQK. The chain crosses the membrane as a helical span at residues 118–138; it reads LFGMIITIGQAVVYVMTGMYG. Residues 139–144 are Lumenal-facing; sequence DPSEMG. The chain crosses the membrane as a helical span at residues 145-165; that stretch reads AGICLLIIIQLFVAGLIVLLL. Over 166-172 the chain is Cytoplasmic; that stretch reads DELLQKG. The chain crosses the membrane as a helical span at residues 173 to 193; the sequence is YGLGSGISLFIATNICETIVW. The Lumenal portion of the chain corresponds to 194 to 240; that stretch reads KAFSPTTVNTGRGTEFEGAIIALFHLLATRTDKVRALREAFYRQNLP. Residues 241-261 traverse the membrane as a helical segment; it reads NLMNLIATIFVFAVVIYFQGF. Residues 262-288 are Cytoplasmic-facing; the sequence is RVDLPIKSARYRGQYNTYPIKLFYTSN. The helical transmembrane segment at 289–309 threads the bilayer; sequence IPIILQSALVSNLYVISQMLS. At 310–354 the chain is on the lumenal side; sequence TRFSGNFLVNLLGTWSDTSTGGPARAYPVGGLCYYLSPPESFGTV. Residues 355–375 traverse the membrane as a helical segment; that stretch reads LEDPIHAIIYIIFMLGSCAFF. At 376–420 the chain is on the cytoplasmic side; sequence SKTWIEVSGSSAKDVAKQLKEQQMVMRGHRETSMVHELNRYIPTA. Residues 421–441 traverse the membrane as a helical segment; it reads AAFGGLCIGGLSVMADFLGAI. The Lumenal segment spans residues 442–445; that stretch reads GSGT. A helical transmembrane segment spans residues 446 to 462; sequence GILLAVTIIYQYFEIFV. Over 463-476 the chain is Cytoplasmic; that stretch reads KEQSEVGSVGALLF.

Belongs to the SecY/SEC61-alpha family. The SEC61 channel-forming translocon complex consists of channel-forming core components SEC61A1, SEC61B and SEC61G and different auxiliary components such as SEC62 and SEC63.

The protein localises to the endoplasmic reticulum membrane. Component of SEC61 channel-forming translocon complex that mediates transport of signal peptide-containing precursor polypeptides across the endoplasmic reticulum (ER). Forms a ribosome receptor and a gated pore in the ER membrane, both functions required for cotranslational translocation of nascent polypeptides. This is Protein transport protein Sec61 subunit alpha-like 2 (sec61al2) from Danio rerio (Zebrafish).